Reading from the N-terminus, the 410-residue chain is Envelope glycoprotein (410 aa).

The Extracellular segment spans residues 1–410; that stretch reads PHQIYNVTWV…VRFRREPISL (410 aa). N-linked (GlcNAc...) asparagine; by host glycans are attached at residues N6 and N21. Cystine bridges form between C85–C107 and C99–C112. The segment at 193–242 is disordered; the sequence is PPQAMGPNLVLPDRKPPSRQSQTGSKVATQRPQTNESAPRSIAPTTMGPK. The span at 210-230 shows a compositional bias: polar residues; sequence SRQSQTGSKVATQRPQTNESA. Residues N227, N262, and N267 are each glycosylated (N-linked (GlcNAc...) asparagine; by host). The CXXC motif lies at 272 to 275; sequence CWLC. N-linked (GlcNAc...) asparagine; by host glycans are attached at residues N294, N334, N350, and N370.

In terms of assembly, the mature envelope protein (Env) consists of a trimer of SU-TM heterodimers attached by a labile interchain disulfide bond. In terms of processing, specific enzymatic cleavages in vivo yield mature proteins. Envelope glycoproteins are synthesized as an inactive precursor that is N-glycosylated and processed likely by host cell furin or by a furin-like protease in the Golgi to yield the mature SU and TM proteins. The cleavage site between SU and TM requires the minimal sequence [KR]-X-[KR]-R.

It is found in the virion membrane. It localises to the host cell membrane. Its function is as follows. The surface protein (SU) attaches the virus to the host cell by binding to its receptor. This interaction triggers the refolding of the transmembrane protein (TM) and is thought to activate its fusogenic potential by unmasking its fusion peptide. Fusion occurs at the host cell plasma membrane. Functionally, the transmembrane protein (TM) acts as a class I viral fusion protein. Under the current model, the protein has at least 3 conformational states: pre-fusion native state, pre-hairpin intermediate state, and post-fusion hairpin state. During viral and target cell membrane fusion, the coiled coil regions (heptad repeats) assume a trimer-of-hairpins structure, positioning the fusion peptide in close proximity to the C-terminal region of the ectodomain. The formation of this structure appears to drive apposition and subsequent fusion of viral and target cell membranes. Membranes fusion leads to delivery of the nucleocapsid into the cytoplasm. In Feline leukemia virus (strain C/FA27), this protein is Envelope glycoprotein (env).